Here is a 68-residue protein sequence, read N- to C-terminus: Conotoxin tx3b (68 aa).

The signal sequence occupies residues 1 to 19; the sequence is MSKLGALLTICLLLFSLTA. Residues 20 to 52 constitute a propeptide that is removed on maturation; it reads VPLDGDQHADQPAQRLQDRIPTEDHPLFDPNKR. Disulfide bonds link cysteine 53–cysteine 67, cysteine 54–cysteine 63, and cysteine 59–cysteine 66. Methionine 61 is subject to Methionine sulfoxide; partial. Cysteine 67 carries the cysteine amide modification.

Expressed by the venom duct.

The protein resides in the secreted. Its function is as follows. Intracranial injection into mice causes scratching, hyperactivity and circular motion. The chain is Conotoxin tx3b from Conus textile (Cloth-of-gold cone).